The sequence spans 61 residues: Small ribosomal subunit protein uS14 (61 aa).

Cys-24, Cys-27, Cys-40, and Cys-43 together coordinate Zn(2+).

This sequence belongs to the universal ribosomal protein uS14 family. Zinc-binding uS14 subfamily. Part of the 30S ribosomal subunit. Contacts proteins S3 and S10. The cofactor is Zn(2+).

Binds 16S rRNA, required for the assembly of 30S particles and may also be responsible for determining the conformation of the 16S rRNA at the A site. The chain is Small ribosomal subunit protein uS14 from Borrelia hermsii (strain HS1 / DAH).